Here is a 136-residue protein sequence, read N- to C-terminus: Cytochrome c oxidase subunit 13, mitochondrial (136 aa).

The transit peptide at 1-29 (MFAQRQMFFARLAANLRAPAVRQTVQRRF) directs the protein to the mitochondrion. At 30–62 (ASTPANESGKNAFVREREAVKQHAAETTELWRK) the chain is on the mitochondrial matrix side. Residues 63–83 (ISLYGIPPALALAGYNAYTLY) traverse the membrane as a helical segment. Topologically, residues 84-136 (NEHWEHWSHLPPLEERTEYPYQNIRTRNYPWGDGDKTLFWNESVNYHNRDKVT) are mitochondrial intermembrane.

Belongs to the cytochrome c oxidase subunit 6A family. As to quaternary structure, component of the cytochrome c oxidase (complex IV, CIV), a multisubunit enzyme composed of 11 subunits. The complex is composed of a catalytic core of 3 subunits Cox1, Cox2 and Cox3, encoded in the mitochondrial DNA, and 8 supernumerary subunits Cox4, Cox5a/Cox5, Cox6, Cox7, Cox8, Cox7a/Cox9, Cox6b/Cox12 and Cox6a/Cox13, which are encoded in the nuclear genome. The complex exists as a monomer or a dimer and forms respiratory supercomplexes (SCs) in the inner mitochondrial membrane with NADH-ubiquinone oxidoreductase (complex I, CI) and ubiquinol-cytochrome c oxidoreductase (cytochrome b-c1 complex, complex III, CIII), resulting in various different assemblies (supercomplexes I(1)IV(1), I(1)III(3)IV(2), III(2)IV(1) and III(2)IV(2) as well as larger supercomplexes of compositions like I(1)III(2)IV(5-6)). Cox6a/Cox13 was not present in the cryo-EM structure. It may be involved in complex IV dimer formation and might not be always expressed. This would explain its absence in the map of the isolated monomer.

It localises to the mitochondrion inner membrane. It participates in energy metabolism; oxidative phosphorylation. In terms of biological role, component of the cytochrome c oxidase, the last enzyme in the mitochondrial electron transport chain which drives oxidative phosphorylation. The respiratory chain contains 3 multisubunit complexes succinate dehydrogenase (complex II, CII), ubiquinol-cytochrome c oxidoreductase (cytochrome b-c1 complex, complex III, CIII) and cytochrome c oxidase (complex IV, CIV), that cooperate to transfer electrons derived from NADH and succinate to molecular oxygen, creating an electrochemical gradient over the inner membrane that drives transmembrane transport and the ATP synthase. Cytochrome c oxidase is the component of the respiratory chain that catalyzes the reduction of oxygen to water. Electrons originating from reduced cytochrome c in the intermembrane space (IMS) are transferred via the dinuclear copper A center (CU(A)) of Cox2 and heme A of Cox1 to the active site in Cox1, a binuclear center (BNC) formed by heme A3 and copper B (CU(B)). The BNC reduces molecular oxygen to 2 water molecules using 4 electrons from cytochrome c in the IMS and 4 protons from the mitochondrial matrix. In Neurospora crassa (strain ATCC 24698 / 74-OR23-1A / CBS 708.71 / DSM 1257 / FGSC 987), this protein is Cytochrome c oxidase subunit 13, mitochondrial (eat-5).